The sequence spans 324 residues: Casein kinase I (324 aa).

The Protein kinase domain maps to 9–278; it reads YALGKKLGSG…LRRLLKDLFI (270 aa). Residues 15 to 23 and K38 each bind ATP; that span reads LGSGSFGDI. The active-site Proton acceptor is the D128.

This sequence belongs to the protein kinase superfamily. CK1 Ser/Thr protein kinase family. Casein kinase I subfamily. As to quaternary structure, interacts with rhoptry protein RON3; the interaction is direct. Interacts with CK2alpha; the interaction is direct. Interacts with nucleosome assembly protein NAPL. Interacts with RAB5b. Interacts with host GAPVD1. Interacts with host SNX22. It depends on Mg(2+) as a cofactor.

It is found in the cytoplasm. The protein resides in the cytoplasmic vesicle. Its subcellular location is the secretory vesicle. The protein localises to the microneme. It localises to the secreted. It is found in the host cell surface. The catalysed reaction is L-seryl-[protein] + ATP = O-phospho-L-seryl-[protein] + ADP + H(+). It carries out the reaction L-threonyl-[protein] + ATP = O-phospho-L-threonyl-[protein] + ADP + H(+). Functionally, serine/threonine-protein kinase likely to be involved in many cellular processes. Phosphorylates rhoptry protein RON3, nucleosome assembly protein NAPL and DNA/RNA-binding protein ALBA4 in vitro. This chain is Casein kinase I, found in Plasmodium falciparum (isolate Dd2).